Consider the following 520-residue polypeptide: NAD(P)H-quinone oxidoreductase subunit 2 (520 aa).

The next 14 helical transmembrane spans lie at 26 to 46 (AVLP…VDLA), 54 to 74 (WSPP…AMQW), 91 to 111 (LAIA…LISW), 120 to 140 (PIGE…LLCG), 144 to 164 (LVSV…LSGY), 179 to 199 (LLVG…LYGI), 220 to 240 (SALA…AVPF), 252 to 272 (PTPV…ALAI), 288 to 308 (LLFT…ALAQ), 314 to 334 (MLAY…VCGT), 342 to 362 (VLYM…IILF), 386 to 406 (LGLS…GFFG), 421 to 441 (LLVT…ISVI), and 474 to 494 (VALI…NPLF).

This sequence belongs to the complex I subunit 2 family. NDH-1 can be composed of about 15 different subunits; different subcomplexes with different compositions have been identified which probably have different functions.

The protein localises to the cellular thylakoid membrane. It catalyses the reaction a plastoquinone + NADH + (n+1) H(+)(in) = a plastoquinol + NAD(+) + n H(+)(out). The catalysed reaction is a plastoquinone + NADPH + (n+1) H(+)(in) = a plastoquinol + NADP(+) + n H(+)(out). In terms of biological role, NDH-1 shuttles electrons from an unknown electron donor, via FMN and iron-sulfur (Fe-S) centers, to quinones in the respiratory and/or the photosynthetic chain. The immediate electron acceptor for the enzyme in this species is believed to be plastoquinone. Couples the redox reaction to proton translocation, and thus conserves the redox energy in a proton gradient. Cyanobacterial NDH-1 also plays a role in inorganic carbon-concentration. The sequence is that of NAD(P)H-quinone oxidoreductase subunit 2 from Prochlorococcus marinus (strain NATL2A).